Here is a 261-residue protein sequence, read N- to C-terminus: MSYTPGIGGDSAQLAQRISSNIQKITQCSVEIQRTLNQLGTPQDSPELRQLLQQKQQYTNQLAKETDKYIKEFGSLPTTPSEQRQRKIQKDRLVAEFTTSLTNFQKAQRQAAEREKEFVARVRASSRVSGGFPEDSSKEKNLVSWESQTQPQVQVQDEEITEDDLRLIHERESSIRQLEADIMDINEIFKDLGMMIHEQGDMIDSIEANVESAEVHVQQANQQLSRAADYQRKSRKTLCIIIFILVVRIVIICLIVWGLKG.

Serine 2 carries the post-translational modification N-acetylserine. Residues 2-238 (SYTPGIGGDS…DYQRKSRKTL (237 aa)) are Cytoplasmic-facing. The residue at position 4 (threonine 4) is a Phosphothreonine. Residue serine 45 is modified to Phosphoserine. Residues 47–68 (ELRQLLQQKQQYTNQLAKETDK) adopt a coiled-coil conformation. Serine 75 is subject to Phosphoserine. A Phosphothreonine modification is found at threonine 79. 4 positions are modified to phosphoserine: serine 125, serine 126, serine 129, and serine 205. The interval 128–148 (VSGGFPEDSSKEKNLVSWESQ) is disordered. In terms of domain architecture, t-SNARE coiled-coil homology spans 165–227 (LRLIHERESS…QQANQQLSRA (63 aa)). Residues 239 to 259 (CIIIFILVVRIVIICLIVWGL) form a helical; Anchor for type IV membrane protein membrane-spanning segment. Over 260-261 (KG) the chain is Vesicular.

It belongs to the syntaxin family. In terms of assembly, interacts with VPS11, VPS16 and VPS18. Interacts with VPS33A. Forms a SNARE complex with VTI1B, STX8 and VAMP8 which functions in the homotypic fusion of late endosomes. Component of the SNARE complex composed of STX7, STX8, VAMP7 and VTI1B that is required for heterotypic fusion of late endosomes with lysosomes. Interacts with TPC1.

Its subcellular location is the early endosome membrane. Its function is as follows. May be involved in protein trafficking from the plasma membrane to the early endosome (EE) as well as in homotypic fusion of endocytic organelles. Mediates the endocytic trafficking from early endosomes to late endosomes and lysosomes. This Mus musculus (Mouse) protein is Syntaxin-7 (Stx7).